A 301-amino-acid chain; its full sequence is Recombination-associated protein RdgC (301 aa).

It belongs to the RdgC family.

It is found in the cytoplasm. It localises to the nucleoid. Functionally, may be involved in recombination. In Stenotrophomonas maltophilia (strain R551-3), this protein is Recombination-associated protein RdgC.